Reading from the N-terminus, the 387-residue chain is EARP-interacting protein homolog (387 aa).

WD repeat units follow at residues Thr-132–Val-172, Lys-182–Cys-222, Ala-226–Lys-266, and Glu-270–Phe-310. Positions Gly-311–Ile-339 are disordered. A compositionally biased stretch (acidic residues) spans Asp-315 to Pro-326. A WD 5 repeat occupies Glu-345–Ile-385.

The protein belongs to the WD repeat EIPR1 family.

The protein localises to the golgi apparatus. The protein resides in the trans-Golgi network. Its function is as follows. May act as a component of endosomal retrieval machinery that is involved in protein transport from early endosomes to either recycling endosomes or the trans-Golgi network. This is EARP-interacting protein homolog from Xenopus laevis (African clawed frog).